Here is a 902-residue protein sequence, read N- to C-terminus: 3'-5' exonuclease DinG (902 aa).

The 154-residue stretch at 8 to 161 (VVDLETTGNQ…DEDATTTAKL (154 aa)) folds into the Exonuclease domain. The region spanning 241–496 (KNVTQSLNLT…KAVDKLEQQR (256 aa)) is the Helicase ATP-binding domain. 276 to 283 (APLGSGKS) serves as a coordination point for ATP. The short motif at 448-451 (DEAH) is the DEAH box element. The Helicase C-terminal domain maps to 714-883 (YIVEYITVTQ…HFKQRKGNIK (170 aa)).

This sequence belongs to the helicase family. DinG subfamily. Type 2 sub-subfamily.

In terms of biological role, 3'-5' exonuclease. This is 3'-5' exonuclease DinG from Staphylococcus epidermidis (strain ATCC 35984 / DSM 28319 / BCRC 17069 / CCUG 31568 / BM 3577 / RP62A).